The sequence spans 606 residues: NADH-ubiquinone oxidoreductase chain 5 (606 aa).

Helical transmembrane passes span 1–21, 43–63, 87–107, 117–137, 140–160, 171–191, 201–221, 241–261, 273–293, 310–330, 365–385, 409–429, 457–477, 488–508, and 582–602; these read MNMF…PIIM, AFMI…ETIF, MIFV…SMWY, FFKY…ANNM, LFIG…WWYG, AVLY…WFLL, IFIT…LAAT, TPVS…FLLI, IQTL…ICAL, LGLM…LHIC, VLPF…GMPF, LLIT…IMFF, LLIG…PTTI, MTAL…NLTT, and GLIK…LLIL.

Belongs to the complex I subunit 5 family. Core subunit of respiratory chain NADH dehydrogenase (Complex I) which is composed of 45 different subunits.

Its subcellular location is the mitochondrion inner membrane. The catalysed reaction is a ubiquinone + NADH + 5 H(+)(in) = a ubiquinol + NAD(+) + 4 H(+)(out). Core subunit of the mitochondrial membrane respiratory chain NADH dehydrogenase (Complex I) which catalyzes electron transfer from NADH through the respiratory chain, using ubiquinone as an electron acceptor. Essential for the catalytic activity and assembly of complex I. This is NADH-ubiquinone oxidoreductase chain 5 (MT-ND5) from Canis lupus familiaris (Dog).